Here is a 461-residue protein sequence, read N- to C-terminus: Diacylglycerol O-acyltransferase 1 (461 aa).

Positions 1–38 (MQDSMDDSLREAEGRQDDSEVSSGTTLGSSTPEDSGVT) are disordered. The Cytoplasmic segment spans residues 1–112 (MQDSMDDSLR…TLVVAWHTSS (112 aa)). Basic and acidic residues predominate over residues 7–18 (DSLREAEGRQDD). The span at 21 to 33 (VSSGTTLGSSTPE) shows a compositional bias: polar residues. The helical transmembrane segment at 113 to 133 (FIYMTVLVLFLAANPLMWWFM) threads the bilayer. Residues 134-230 (VPYMVYYVWN…ARPQVATGPR (97 aa)) are Lumenal-facing. Residues 231–251 (YIFGYHPHGVGALGAFGAIAT) form a helical membrane-spanning segment. At 252 to 258 (EGCNWSK) the chain is on the cytoplasmic side. The chain crosses the membrane as a helical span at residues 259 to 279 (VFAGIPACLCTLVNQFQIPIY). Residues 280–332 (RDYLLGLGCTSVARKNVLKVLEQNYSVCIVVGGAQEALLSRVGSTELVLNKRK) lie on the Lumenal side of the membrane. The helical transmembrane segment at 333–353 (GFIKLALETGNVNLVPIYAFG) threads the bilayer. Over 354 to 461 (ETDCFNVLDT…YAGKELKIVE (108 aa)) the chain is Cytoplasmic.

The protein belongs to the diacylglycerol acyltransferase family.

It is found in the lipid droplet. The protein resides in the endoplasmic reticulum membrane. It catalyses the reaction an acyl-CoA + a 1,2-diacyl-sn-glycerol = a triacyl-sn-glycerol + CoA. It carries out the reaction a 2-acylglycerol + an acyl-CoA = a 1,2-diacyl-sn-glycerol + CoA. It functions in the pathway glycerolipid metabolism; triacylglycerol biosynthesis. Catalyzes the terminal and only committed step in triacylglycerol (TAG) synthesis by using diacylglycerol (DAG) and fatty acyl-CoA as substrates. Required for storage lipid synthesis. Major DAG esterifying enzyme in stationary phase when TAG production is particularly active. Involved in lipid particle synthesis from the endoplasmic reticulum, promoting localized TAG production at discrete ER subdomains. The polypeptide is Diacylglycerol O-acyltransferase 1 (DGA1) (Eremothecium gossypii (strain ATCC 10895 / CBS 109.51 / FGSC 9923 / NRRL Y-1056) (Yeast)).